Reading from the N-terminus, the 347-residue chain is MTTPPITELTTRARDVFRLVVDAYLETGQPVGSRTLSKLATLNLSPASIRNVMQDLEEYGLLASPHTSAGRMPTEQGLRLFVDGMMQVAEPSAEDRAQIEASLSEGGPIESALAQATAALSGLSACAGLVLVPKHERVLKQVAFVPMSERQALVVLVAGDGTVENRIIDVPAGLDPSALVEAGNFISATLSGLTLTEAMARVRREIEAERIAIDRAAQDLVSRGLAIWSSDGADRPVLIVRGQANLLDDSAVGDLDRVRQLLDELETKQDIAQLLDSAREGSATRIFIGSENKLFSLSGSSVIAAPYRGADGRVVGVVGVIGPTRLNYARIVPMVDFTAQSLSRLIR.

Belongs to the HrcA family.

Its function is as follows. Negative regulator of class I heat shock genes (grpE-dnaK-dnaJ and groELS operons). Prevents heat-shock induction of these operons. This is Heat-inducible transcription repressor HrcA from Sphingopyxis alaskensis (strain DSM 13593 / LMG 18877 / RB2256) (Sphingomonas alaskensis).